The following is a 103-amino-acid chain: Flagellar hook-basal body complex protein FliE (103 aa).

The protein belongs to the FliE family.

It is found in the bacterial flagellum basal body. The polypeptide is Flagellar hook-basal body complex protein FliE (Yersinia enterocolitica serotype O:8 / biotype 1B (strain NCTC 13174 / 8081)).